A 257-amino-acid chain; its full sequence is RNA polymerase sigma-G factor (257 aa).

The short motif at 66 to 79 (DLFQVGCIGLIKSI) is the Polymerase core binding element. Residues 228–247 (QMEVADEIGISQAQVSRLEK) constitute a DNA-binding region (H-T-H motif).

It belongs to the sigma-70 factor family.

Functionally, sigma factors are initiation factors that promote the attachment of RNA polymerase to specific initiation sites and are then released. This sigma factor is responsible for the expression of sporulation specific genes. This Clostridium acetobutylicum (strain ATCC 824 / DSM 792 / JCM 1419 / IAM 19013 / LMG 5710 / NBRC 13948 / NRRL B-527 / VKM B-1787 / 2291 / W) protein is RNA polymerase sigma-G factor (sigG).